Consider the following 335-residue polypeptide: Beta-ketoacyl-[acyl-carrier-protein] synthase III (335 aa).

Residues Cys-120 and His-261 contribute to the active site. Residues 262-266 form an ACP-binding region; the sequence is QANER. The active site involves Asn-291.

It belongs to the thiolase-like superfamily. FabH family. In terms of assembly, homodimer.

It localises to the cytoplasm. The catalysed reaction is malonyl-[ACP] + acetyl-CoA + H(+) = 3-oxobutanoyl-[ACP] + CO2 + CoA. The protein operates within lipid metabolism; fatty acid biosynthesis. Catalyzes the condensation reaction of fatty acid synthesis by the addition to an acyl acceptor of two carbons from malonyl-ACP. Catalyzes the first condensation reaction which initiates fatty acid synthesis and may therefore play a role in governing the total rate of fatty acid production. Possesses both acetoacetyl-ACP synthase and acetyl transacylase activities. Its substrate specificity determines the biosynthesis of branched-chain and/or straight-chain of fatty acids. The protein is Beta-ketoacyl-[acyl-carrier-protein] synthase III of Chlamydia pneumoniae (Chlamydophila pneumoniae).